The primary structure comprises 719 residues: MHYVVLELQVAHLPDTPKDQCRIANIAFQIVNAETLVCHYGTNSLPSIEVNGTTKSLESAMVQLDKDIHDVIGNDDFVLVSLYSTWHIRVTLPRQARDDGFILTSYLQHPKVFDLWKEFDRWCVNHPEILGQKKAISNNNCNTKSISINAAKNTKDLDEIVRILEVSIPTEEAGSVPEIYSLLKRTTDILIQLHKKCTSPEDMESVLTKPYDSHTDIRAFLQEKSKILYMNNLPPDTTQSELESWFTQYGVRPVGFWTVKNIVEDTSNVNNNWSLNNSPYVEDQDSISGFVVFQTHEEATEVLALNGRSILSNLANTKQPRVVEHVLELQPSSTGVLDKAQEILSPFPQSKNKPRPGDWNCPSCGFSNFQRRTACFRCSFPAPSNSQIHTANSNNNVNSSRNNLNNRVNSGSSSNISNTAANHPYGAPEFNMIANNTPAALTYNRAHFPAITPLSRQNSLNMAPSNSGSPIIIADHFSGNNNIAPNYRYNNNINNNNNNINNMTNNRYNINNNINGNGNGNGNNSNNNNNHNNNHNNNHHNGSINSNSNTNNNNNNNNGNNSNNCNSNIGMGGCGSNMPFRAGDWKCSTCTYHNFAKNVVCLRCGGPKSISGDASETNHYIDSSTFGPASRTPSNNNISVNTNGGSNAGRTDGNDNKGRDISLMEFMSPPLSMATKSMKEGDGNGSSFNEFKSDKANVNFSNVGDNSAFGNGFNSSIRW.

Residues 226–322 (KILYMNNLPP…NLANTKQPRV (97 aa)) form the RRM domain. Ser345 carries the phosphoserine modification. A RanBP2-type 1 zinc finger spans residues 355–384 (RPGDWNCPSCGFSNFQRRTACFRCSFPAPS). The tract at residues 389–415 (HTANSNNNVNSSRNNLNNRVNSGSSSN) is disordered. Residues 392–415 (NSNNNVNSSRNNLNNRVNSGSSSN) are compositionally biased toward low complexity. Ser455 carries the phosphoserine modification. The segment at 511-561 (NNNINGNGNGNGNNSNNNNNHNNNHNNNHHNGSINSNSNTNNNNNNNNGNN) is disordered. The segment at 581 to 610 (RAGDWKCSTCTYHNFAKNVVCLRCGGPKSI) adopts a RanBP2-type 2 zinc-finger fold. Residues 622-649 (DSSTFGPASRTPSNNNISVNTNGGSNAG) are compositionally biased toward polar residues. Residues 622 to 661 (DSSTFGPASRTPSNNNISVNTNGGSNAGRTDGNDNKGRDI) are disordered. Ser630 carries the phosphoserine modification. A compositionally biased stretch (basic and acidic residues) spans 652–661 (DGNDNKGRDI).

The protein resides in the chromosome. Its subcellular location is the nucleus. May play a role in chromatin organization. The sequence is that of Putative RNA-binding protein involved in heterochromatin assembly from Saccharomyces cerevisiae (strain ATCC 204508 / S288c) (Baker's yeast).